Reading from the N-terminus, the 1042-residue chain is Diacylglycerol lipase-alpha (1042 aa).

Topologically, residues 1 to 22 are cytoplasmic; the sequence is MPGIVVFRRRWSVGSDDLVLPA. A helical membrane pass occupies residues 23–43; the sequence is IFLFLLHTTWFVILSVVLFGL. Topologically, residues 44 to 60 are extracellular; sequence VYNPHEACSLNLVDHGR. The chain crosses the membrane as a helical span at residues 61–81; it reads GYLGILLSCMIAEMAIIWLSM. Residues 82 to 101 are Cytoplasmic-facing; it reads RGGILYTEPRDSMQYVLYVR. Residues 102–122 form a helical membrane-spanning segment; the sequence is LAILVIEFIYAIVGIVWLTQY. Topologically, residues 123 to 136 are extracellular; it reads YTSCNDLTAKNVTL. A glycan (N-linked (GlcNAc...) asparagine) is linked at asparagine 133. A helical membrane pass occupies residues 137-157; it reads GMVVCNWVVILSVCITVLCVF. Over 158-1042 the chain is Cytoplasmic; the sequence is DPTGRTFVKL…KQDELVISAR (885 aa). Catalysis depends on charge relay system residues serine 472 and aspartate 524. 11 positions are modified to phosphoserine: serine 727, serine 729, serine 732, serine 743, serine 782, serine 784, serine 806, serine 808, serine 833, serine 847, and serine 952. Residues 846–903 form a disordered region; sequence LSKHSQDTQPLEAALGSGGVTPERPPSAAANDEEEEVGGGGGGPASRGELALHNGRLG. The interval 1014-1042 is disordered; the sequence is LAADKIRTSTPTGHGASPAKQDELVISAR. Threonine 1023 bears the Phosphothreonine mark.

Belongs to the AB hydrolase superfamily. Lipase family. Interacts (via C-terminal) with CAMK2A; leading to the phosphorylation and inhibition of DAGLA enzymatic activity. Interacts (via PPXXF motif) with HOMER1 and HOMER2; this interaction is required for DAGLA membrane localization. Ca(2+) serves as cofactor. In terms of processing, phosphorylated at Ser-782 and Ser-808 by CAMK2A; phosphorylation by CAMK2A inhibits diacylglycerol lipase activity. In terms of tissue distribution, highly expressed in brain and pancreas.

It localises to the cell membrane. The protein localises to the postsynaptic density membrane. Its subcellular location is the early endosome membrane. It is found in the cell projection. The protein resides in the dendritic spine membrane. The enzyme catalyses a 1,2-diacyl-sn-glycerol + H2O = a 2-acylglycerol + a fatty acid + H(+). It catalyses the reaction 1-octadecanoyl-2-(5Z,8Z,11Z,14Z-eicosatetraenoyl)-sn-glycerol + H2O = 2-(5Z,8Z,11Z,14Z-eicosatetraenoyl)-glycerol + octadecanoate + H(+). It carries out the reaction 1,2-di-(9Z-octadecenoyl)-sn-glycerol + H2O = 2-(9Z-octadecenoyl)-glycerol + (9Z)-octadecenoate + H(+). The catalysed reaction is 1-(9Z-octadecenoyl)-2-(5Z,8Z,11Z,14Z-eicosatetraenoyl)-sn-glycerol + H2O = 2-(5Z,8Z,11Z,14Z-eicosatetraenoyl)-glycerol + (9Z)-octadecenoate + H(+). The enzyme catalyses 1-(9Z-octadecenoyl)-2-octadecanoyl-sn-glycerol + H2O = 2-octadecanoylglycerol + (9Z)-octadecenoate + H(+). It catalyses the reaction 1-(9Z-octadecenoyl)-2-(9Z,12Z-octadecadienoyl)-sn-glycerol + H2O = 2-(9Z,12Z-octadecadienoyl)-glycerol + (9Z)-octadecenoate + H(+). It carries out the reaction 1-(9Z-octadecenoyl)-2-O-(5Z,8Z,11Z,14Z-eicosatetraenyl)-sn-glycerol + H2O = 2-O-(5Z,8Z,11Z,14Z)-eicosatetraenylglycerol + (9Z)-octadecenoate + H(+). Inhibited by 1,2,3-triazole urea covalent inhibitors KT172, DH376 and DO34. Inhibited by p-hydroxy-mercuri-benzoate and HgCl(2), but not to PMSF. Also inhibited by RHC80267. Diacylglycerol lipase activity is inhibited by the phosphorylation of Ser-782 and Ser-808 by CAMK2A. Serine hydrolase that hydrolyzes arachidonic acid-esterified diacylglycerols (DAGs) to produce the principal endocannabinoid, 2-arachidonoylglycerol (2-AG). Preferentially hydrolyzes sn-1 fatty acids from diacylglycerols (DAG) that contain arachidonic acid (AA) esterified at the sn-2 position to biosynthesize 2-AG. Has negligible activity against other lipids including monoacylglycerols and phospholipids. Plays a key role in regulating 2-AG signaling in the central nervous system (CNS). Regulates 2-AG involved in retrograde suppression at central synapses. Supports axonal growth during development and adult neurogenesis. Plays a role for eCB signaling in the physiological regulation of anxiety and depressive behaviors. Also regulates neuroinflammatory responses in the brain, in particular, LPS-induced microglial activation. The chain is Diacylglycerol lipase-alpha (DAGLA) from Homo sapiens (Human).